The primary structure comprises 560 residues: MKVWMAILISILCWQSSVWAVCPAWSPARAQEEIFRLQQQIKQWDDDYWKEGKSEVEDGVYDQLSARLTQWQRCFVSEPRDVMMPPLNGAVMHPVAHTGVRKMADKNALSLWMRERSDLWVQPKVDGVAVTLVYRDGKLNKAISRGNGLKGEDWTQKVSLISAVPQTVSGPLANSTLQGEIFLQREGHIQQQMGGINARAKVAGLMMRQDDSDTLNSLGVFVWAWPDGPQLMTDRLKELATAGFTLTQRYTRAVKNADEVARVRNEWWKAKLPFVTDGVVVRGAKEPESRHWLPGQAEWLVAWKYQPVAQVAKVKAIQFAVGKSGKISVVASLAPVMLDDKKVQRVNIGSVRRWQEWDIAPGDQILVSLAGQGIPRIDDVVWRGAERTKPTPPENRFNSLTCYFASDVCQEQFISRLVWLGSKQVLGLDGIGEAGWRALHQTHRFEHIFSWLLLTPEQLQNTPGIAKSKSAQLWHRFNLARKQPFTRWVMAMGIPLTRAALNASDERSWSQLLFSTEQFWQQLPGTGSGRARQVIEWKENAQIKKLGSWLAAQQITGFEP.

Lys124 acts as the N6-AMP-lysine intermediate in catalysis.

This sequence belongs to the NAD-dependent DNA ligase family. LigB subfamily.

The enzyme catalyses NAD(+) + (deoxyribonucleotide)n-3'-hydroxyl + 5'-phospho-(deoxyribonucleotide)m = (deoxyribonucleotide)n+m + AMP + beta-nicotinamide D-nucleotide.. In terms of biological role, catalyzes the formation of phosphodiester linkages between 5'-phosphoryl and 3'-hydroxyl groups in double-stranded DNA using NAD as a coenzyme and as the energy source for the reaction. The polypeptide is DNA ligase B (Escherichia coli O157:H7).